A 1227-amino-acid chain; its full sequence is Codanin-1 (1227 aa).

An N-acetylalanine modification is found at A2. A disordered region spans residues 63–294 (RVLPQGPPTP…SLTDEPADPA (232 aa)). T71 carries the post-translational modification Phosphothreonine. Basic and acidic residues predominate over residues 128–137 (ARERGGRGLE). Residues 155-167 (GSGSPSRPSLTLS) are compositionally biased toward low complexity. Residues 188–208 (PTGTKPSRRINPTPVSEERSL) form an interaction with ASF1A/B region. A compositionally biased stretch (polar residues) spans 214 to 232 (CFTSPPISCVPSSQPSALD). Basic and acidic residues predominate over residues 247–260 (LQEEREMLRKERSK). Phosphoserine occurs at positions 265 and 285. The next 2 helical transmembrane spans lie at 312 to 332 (CIAE…FQLL) and 626 to 646 (FAVV…VAFL).

In terms of assembly, found in a cytosolic complex with ASF1A, ASF1B, IPO4 and histones H3.1 and H4. As to expression, ubiquitously expressed. Isoform 3 is not found in erythroid cells.

The protein resides in the cytoplasm. Its subcellular location is the nucleus. It localises to the membrane. Functionally, may act as a negative regulator of ASF1 in chromatin assembly. This is Codanin-1 (CDAN1) from Homo sapiens (Human).